A 574-amino-acid chain; its full sequence is Septation ring formation regulator EzrA (574 aa).

The Extracellular portion of the chain corresponds to 1–7 (MSSGIIL). A helical transmembrane segment spans residues 8–26 (LIVAIVLLVIIAYLVGVII). Residues 27–574 (RKRNDTLITS…YEKTRERIRF (548 aa)) are Cytoplasmic-facing. Coiled coils occupy residues 102–131 (NFIRAKHEINSVESQLNLVEEDITAIREAL), 161–190 (ENEDNFGSTMAEIEKQMKNIEAEFSQFVAL), 276–379 (VTLD…QQEK), and 459–493 (QLEALMDELSRGRINIEAVSRLSEVATAAIANLEE).

The protein belongs to the EzrA family.

The protein localises to the cell membrane. Negative regulator of FtsZ ring formation; modulates the frequency and position of FtsZ ring formation. Inhibits FtsZ ring formation at polar sites. Interacts either with FtsZ or with one of its binding partners to promote depolymerization. The protein is Septation ring formation regulator EzrA of Streptococcus equi subsp. zooepidemicus (strain H70).